The primary structure comprises 423 residues: UPF0229 protein PSPA7_0730 (423 aa).

Residues 84-107 (AGEHIARPSGGGGGRGGGKASNSG) form a disordered region. Over residues 92-102 (SGGGGGRGGGK) the composition is skewed to gly residues.

It belongs to the UPF0229 family.

In Pseudomonas paraeruginosa (strain DSM 24068 / PA7) (Pseudomonas aeruginosa (strain PA7)), this protein is UPF0229 protein PSPA7_0730.